The following is a 517-amino-acid chain: Serine O-succinyltransferase (517 aa).

A mitochondrion-targeting transit peptide spans 1–46 (MSPLNGVARSLPRPFQAVARRPFRVAQPAVACPSNRRSFNHSRSLR). The segment at 34-66 (SNRRSFNHSRSLRSTGSQSPAPSPRDSSNPALS) is disordered. The span at 45-64 (LRSTGSQSPAPSPRDSSNPA) shows a compositional bias: polar residues. In terms of domain architecture, AB hydrolase-1 spans 134–386 (NVILLHTGLS…LTQQLATKKQ (253 aa)). The segment at 141-144 (GLSA) is important for substrate specificity. Residue serine 238 is the Nucleophile of the active site. Substrate is bound at residue arginine 307. The tract at residues 413–436 (QPYQEQPSASTSAEQSASASETGS) is disordered. Residues 416-436 (QEQPSASTSAEQSASASETGS) are compositionally biased toward low complexity. Residues aspartate 461 and histidine 498 contribute to the active site. Aspartate 499 is a substrate binding site.

Belongs to the AB hydrolase superfamily. MetX family.

The protein resides in the mitochondrion. It catalyses the reaction succinyl-CoA + L-serine = O-succinyl-L-serine + CoA. It participates in amino-acid biosynthesis; L-cysteine biosynthesis; L-cysteine from L-serine: step 1/2. Its function is as follows. Transfers a succinyl group from succinyl-CoA to L-serine, forming succinyl-L-serine. Also has weak serine acetyl transferase activity and homoserine succinyl transferase activity. This is Serine O-succinyltransferase from Emericella nidulans (Aspergillus nidulans).